The chain runs to 509 residues: Lysine--tRNA ligase (509 aa).

Mg(2+) is bound by residues glutamate 417 and glutamate 424.

Belongs to the class-II aminoacyl-tRNA synthetase family. In terms of assembly, homodimer. Requires Mg(2+) as cofactor.

Its subcellular location is the cytoplasm. It catalyses the reaction tRNA(Lys) + L-lysine + ATP = L-lysyl-tRNA(Lys) + AMP + diphosphate. The sequence is that of Lysine--tRNA ligase from Blochmanniella pennsylvanica (strain BPEN).